A 146-amino-acid polypeptide reads, in one-letter code: MKKVQLITDGACLGNPGPGGWSAILRFEEQKKELWGCEKQTTNNRMELTAAIEGLRALREKCQVEVVTDSEYVLKGITTWIDGWKRKGWMTAAKKPVINQDLWKLLDEQVNRHQATWTWTKGHASHADNNRCDELATRAAREQSKS.

Residues 1-141 (MKKVQLITDG…CDELATRAAR (141 aa)) form the RNase H type-1 domain. Residues D9, E47, D69, and D133 each contribute to the Mg(2+) site.

The protein belongs to the RNase H family. In terms of assembly, monomer. Mg(2+) serves as cofactor.

The protein localises to the cytoplasm. The enzyme catalyses Endonucleolytic cleavage to 5'-phosphomonoester.. Endonuclease that specifically degrades the RNA of RNA-DNA hybrids. This is Ribonuclease H from Solibacter usitatus (strain Ellin6076).